Reading from the N-terminus, the 299-residue chain is Apolipoprotein E (299 aa).

Positions 1–18 are cleaved as a signal peptide; it reads MKVLCTVLVVTLLAGCQA. An 8 X 22 AA approximate tandem repeats region spans residues 74–245; it reads VLMEDTMKAV…RLEEVREQME (172 aa). 8 consecutive repeat copies span residues 75–95, 96–117, 118–139, 140–161, 162–183, 184–206, 207–225, and 224–242. At methionine 137 the chain carries Methionine sulfoxide. Serine 141 is subject to Phosphoserine. The tract at residues 152-162 is LDL and other lipoprotein receptors binding; that stretch reads HLRKLRKKLLR. 156–159 serves as a coordination point for heparin; that stretch reads LRKK. The interval 205–273 is lipid-binding and lipoprotein association; it reads ALTSQPLQER…GWFEPMVEDM (69 aa). A heparin-binding site is contributed by 219–226; sequence GKRLRGRL. The segment at 261 to 273 is specificity for association with VLDL; that stretch reads RLKGWFEPMVEDM.

The protein belongs to the apolipoprotein A1/A4/E family. Homotetramer. May interact with ABCA1; functionally associated with ABCA1 in the biogenesis of HDLs. May interact with APP/A4 amyloid-beta peptide; the interaction is extremely stable in vitro but its physiological significance is unclear. May interact with MAPT. May interact with MAP2. In the cerebrospinal fluid, interacts with secreted SORL1. Interacts with PMEL; this allows the loading of PMEL luminal fragment on ILVs to induce fibril nucleation. In terms of processing, APOE exists as multiple glycosylated and sialylated glycoforms within cells and in plasma. The extent of glycosylation and sialylation are tissue and context specific. Glycated in plasma VLDL. Post-translationally, phosphorylated by FAM20C in the extracellular medium.

Its subcellular location is the secreted. The protein localises to the extracellular space. It is found in the extracellular matrix. The protein resides in the extracellular vesicle. It localises to the endosome. Its subcellular location is the multivesicular body. APOE is an apolipoprotein, a protein associating with lipid particles, that mainly functions in lipoprotein-mediated lipid transport between organs via the plasma and interstitial fluids. APOE is a core component of plasma lipoproteins and is involved in their production, conversion and clearance. Apolipoproteins are amphipathic molecules that interact both with lipids of the lipoprotein particle core and the aqueous environment of the plasma. As such, APOE associates with chylomicrons, chylomicron remnants, very low density lipoproteins (VLDL) and intermediate density lipoproteins (IDL) but shows a preferential binding to high-density lipoproteins (HDL). It also binds a wide range of cellular receptors including the LDL receptor/LDLR, the LDL receptor-related proteins LRP1, LRP2 and LRP8 and the very low-density lipoprotein receptor/VLDLR that mediate the cellular uptake of the APOE-containing lipoprotein particles. Finally, APOE also has a heparin-binding activity and binds heparan-sulfate proteoglycans on the surface of cells, a property that supports the capture and the receptor-mediated uptake of APOE-containing lipoproteins by cells. A main function of APOE is to mediate lipoprotein clearance through the uptake of chylomicrons, VLDLs, and HDLs by hepatocytes. APOE is also involved in the biosynthesis by the liver of VLDLs as well as their uptake by peripheral tissues ensuring the delivery of triglycerides and energy storage in muscle, heart and adipose tissues. By participating in the lipoprotein-mediated distribution of lipids among tissues, APOE plays a critical role in plasma and tissues lipid homeostasis. APOE is also involved in two steps of reverse cholesterol transport, the HDLs-mediated transport of cholesterol from peripheral tissues to the liver, and thereby plays an important role in cholesterol homeostasis. First, it is functionally associated with ABCA1 in the biogenesis of HDLs in tissues. Second, it is enriched in circulating HDLs and mediates their uptake by hepatocytes. APOE also plays an important role in lipid transport in the central nervous system, regulating neuron survival and sprouting. In Ctenomys sociabilis (Social tuco-tuco), this protein is Apolipoprotein E (APOE).